Consider the following 413-residue polypeptide: MASPAIGQRPYPLLLDPEPPRYLQSLGGTEPPPPARPRRCIPTALIPAAGASEDRGGRRSGRRDPEPTPRDCRHARPVRPGLQPRLRLRPGSHRPRDVRSIFEQPQDPRVLAERGEGHRFVELALRGGPGWCDLCGREVLRQALRCANCKFTCHSECRSLIQLDCRQKGGPALDRRSPESTLTPTLNQNVCKAVEETQHPPTIQEIKQKIDSYNSREKHCLGMKLSEDGTYTGFIKVHLKLRRPVTVPAGIRPQSIYDAIKEVNPAATTDKRTSFYLPLDAIKQLHISSTTTVSEVIQGLLKKFMVVDNPQKFALFKRIHKDGQVLFQKLSIADYPLYLRLLAGPDTDVLSFVLKENETGEVEWDAFSIPELQNFLTILEKEEQDKIHQLQKKYNKFRQKLEEALRESQGKPG.

Residues 1-103 form a disordered region; the sequence is MASPAIGQRP…RPRDVRSIFE (103 aa). Positions 52-74 are enriched in basic and acidic residues; the sequence is SEDRGGRRSGRRDPEPTPRDCRH. The Phorbol-ester/DAG-type zinc finger occupies 117 to 165; the sequence is GHRFVELALRGGPGWCDLCGREVLRQALRCANCKFTCHSECRSLIQLDC. Serine 177 and serine 274 each carry phosphoserine. Residues 265–359 form the Ras-associating domain; sequence PAATTDKRTS…LSFVLKENET (95 aa). Threonine 347 carries the phosphothreonine modification. The SARAH domain occupies 361-408; sequence EVEWDAFSIPELQNFLTILEKEEQDKIHQLQKKYNKFRQKLEEALRES.

As to quaternary structure, interacts directly with activated HRAS; a RASSF5-STK4/MST1 complex probably associates with activated HRAS. Interacts with KRAS. Probably interacts with Ras-like GTPases RRAS, MRAS, RAP1B, RAP2A and RALA. Interacts with RRAS2. Can self-associate. Interacts with RSSF1 isoform A. The RSSF1 isoform A-RSSF5 heterodimer probably mediates the association of RSSF1 with HRAS. Isoform 2 interacts with activated RAP1A and ITGAL/LFA-1. Binds STK4/MST1, inhibiting STK4/MST1 autoactivation.

It localises to the cytoplasm. The protein resides in the cytoskeleton. Functionally, potential tumor suppressor. Seems to be involved in lymphocyte adhesion by linking RAP1A activation upon T-cell receptor or chemokine stimulation to integrin activation. Isoform 2 stimulates lymphocyte polarization and the patch-like distribution of ITGAL/LFA-1, resulting in an enhanced adhesion to ICAM1. Together with RAP1A may participate in regulation of microtubule growth. The association of isoform 2 with activated RAP1A is required for directional movement of endothelial cells during wound healing. May be involved in regulation of Ras apoptotic function. The RASSF5-STK4/MST1 complex may mediate HRAS and KRAS induced apoptosis. This chain is Ras association domain-containing protein 5 (Rassf5), found in Mus musculus (Mouse).